Consider the following 361-residue polypeptide: Chorismate synthase (361 aa).

NADP(+) is bound by residues R48 and R54. FMN-binding positions include 125-127 (RSS), 238-239 (NA), G278, 293-297 (KPTSS), and R319.

The protein belongs to the chorismate synthase family. As to quaternary structure, homotetramer. Requires FMNH2 as cofactor.

It catalyses the reaction 5-O-(1-carboxyvinyl)-3-phosphoshikimate = chorismate + phosphate. Its pathway is metabolic intermediate biosynthesis; chorismate biosynthesis; chorismate from D-erythrose 4-phosphate and phosphoenolpyruvate: step 7/7. Its function is as follows. Catalyzes the anti-1,4-elimination of the C-3 phosphate and the C-6 proR hydrogen from 5-enolpyruvylshikimate-3-phosphate (EPSP) to yield chorismate, which is the branch point compound that serves as the starting substrate for the three terminal pathways of aromatic amino acid biosynthesis. This reaction introduces a second double bond into the aromatic ring system. This is Chorismate synthase from Cronobacter sakazakii (strain ATCC BAA-894) (Enterobacter sakazakii).